A 404-amino-acid chain; its full sequence is L-cysteine:1D-myo-inositol 2-amino-2-deoxy-alpha-D-glucopyranoside ligase (404 aa).

Cys47 provides a ligand contact to Zn(2+). L-cysteinyl-5'-AMP contacts are provided by residues 47 to 50, Thr62, and 85 to 87; these read CGIT and NIT. The 'HIGH' region signature appears at 49 to 59; that stretch reads ITPYDSTHLGH. The 'ERGGDP' region motif lies at 188-193; the sequence is ERGGDP. Trp228 is an L-cysteinyl-5'-AMP binding site. Cys232 lines the Zn(2+) pocket. 250-252 provides a ligand contact to L-cysteinyl-5'-AMP; the sequence is GSD. His257 lines the Zn(2+) pocket. Ile284 contributes to the L-cysteinyl-5'-AMP binding site. The 'KMSKS' region motif lies at 290-294; that stretch reads KMSKS.

This sequence belongs to the class-I aminoacyl-tRNA synthetase family. MshC subfamily. As to quaternary structure, monomer. Zn(2+) serves as cofactor.

The catalysed reaction is 1D-myo-inositol 2-amino-2-deoxy-alpha-D-glucopyranoside + L-cysteine + ATP = 1D-myo-inositol 2-(L-cysteinylamino)-2-deoxy-alpha-D-glucopyranoside + AMP + diphosphate + H(+). In terms of biological role, catalyzes the ATP-dependent condensation of GlcN-Ins and L-cysteine to form L-Cys-GlcN-Ins. In Corynebacterium striatum, this protein is L-cysteine:1D-myo-inositol 2-amino-2-deoxy-alpha-D-glucopyranoside ligase.